The primary structure comprises 146 residues: MGRFISVSFGCLVVFLSLSGTEAVLDCPSGWLSYEQHCYKGFNDLKNWTDAEKFCTEQKKGSHLVSLHSREEEEFVVNLISENLEYPATWIGLGNMWKDCRMEWSDRGNVKYKALAEESYCLIMITHEKEWKSMTCNFIAPVVCKF.

The signal sequence occupies residues 1-23; sequence MGRFISVSFGCLVVFLSLSGTEA. Cys27 and Cys38 are oxidised to a cystine. Residues 34-145 form the C-type lectin domain; the sequence is YEQHCYKGFN…CNFIAPVVCK (112 aa). The N-linked (GlcNAc...) (complex) asparagine glycan is linked to Asn47. Intrachain disulfides connect Cys55/Cys144 and Cys121/Cys136.

The protein belongs to the snaclec family. In terms of assembly, heterotrimer; disulfide-linked. The heterotrimer consists of 1 heavy chain (a metalloproteinase) and 2 light chains: LC1 and LC2. Post-translationally, N-glycosylated; probably required for conformation. Removal of easily accessible sugars does not change its functional capacity, but removal of the core sugars with N-glycanase causes a virtually complete loss of enzyme activity, apparently as a result of major conformational changes in the molecule. Not O-glycosylated. As to expression, expressed by the venom gland.

It is found in the secreted. Functionally, regulatory subunit of the blood coagulation factor X- and IX-activating enzyme. The enzyme activates coagulation factor X (F10) by cleaving the Arg-Ile bond and is also able to activate coagulation factor IX (F9) and protein S (PROS1) by specific cleavage of Arg-Ile and Arg-Val bonds. May serve as an exosite by which the enzyme recognizes and binds to the Gla domain of factor X (F10) and factor IX (F9) in a calcium-dependent manner. The sequence is that of Snaclec coagulation factor X-activating enzyme light chain 1 (LC1) from Daboia siamensis (Eastern Russel's viper).